The following is a 326-amino-acid chain: High-affinity zinc uptake system protein ZnuA (326 aa).

The first 22 residues, 1 to 22 (MIRPSSLVLAAALGTAALPARA), serve as a signal peptide directing secretion. Histidine 59 contributes to the Zn(2+) binding site. Positions 117–155 (GGEHEHEHEHEHEHEHEHEHDGHGHAEEQAHHDHDHSGT) are enriched in basic and acidic residues. The interval 117–161 (GGEHEHEHEHEHEHEHEHEHDGHGHAEEQAHHDHDHSGTDPHAWL) is disordered. 3 residues coordinate Zn(2+): histidine 158, histidine 222, and aspartate 295. Cysteine 267 and cysteine 322 form a disulfide bridge.

This sequence belongs to the bacterial solute-binding protein 9 family. Monomer.

It localises to the periplasm. In terms of biological role, part of the ATP-binding cassette (ABC) transport system ZnuABC involved in zinc import. Binds zinc with high affinity and specificity and delivers it to the membrane permease for translocation into the cytoplasm. The chain is High-affinity zinc uptake system protein ZnuA from Paracoccus denitrificans (strain Pd 1222).